Consider the following 257-residue polypeptide: Acetyl-coenzyme A carboxylase carboxyl transferase subunit beta 1 (257 aa).

Residues 1–257 (MNINDIFLKR…KMHVNTGGEA (257 aa)) form the CoA carboxyltransferase N-terminal domain.

This sequence belongs to the AccD/PCCB family. In terms of assembly, acetyl-CoA carboxylase is a heterohexamer composed of biotin carboxyl carrier protein (AccB), biotin carboxylase (AccC) and two subunits each of ACCase subunit alpha (AccA) and ACCase subunit beta (AccD).

The protein localises to the cytoplasm. It catalyses the reaction N(6)-carboxybiotinyl-L-lysyl-[protein] + acetyl-CoA = N(6)-biotinyl-L-lysyl-[protein] + malonyl-CoA. Its pathway is lipid metabolism; malonyl-CoA biosynthesis; malonyl-CoA from acetyl-CoA: step 1/1. Component of the acetyl coenzyme A carboxylase (ACC) complex. Biotin carboxylase (BC) catalyzes the carboxylation of biotin on its carrier protein (BCCP) and then the CO(2) group is transferred by the transcarboxylase to acetyl-CoA to form malonyl-CoA. The polypeptide is Acetyl-coenzyme A carboxylase carboxyl transferase subunit beta 1 (Lachnospira eligens (strain ATCC 27750 / DSM 3376 / VPI C15-48 / C15-B4) (Eubacterium eligens)).